Reading from the N-terminus, the 296-residue chain is Formamidopyrimidine-DNA glycosylase (296 aa).

The active-site Schiff-base intermediate with DNA is Pro-2. Glu-3 (proton donor) is an active-site residue. The Proton donor; for beta-elimination activity role is filled by Lys-58. DNA is bound by residues His-104, Arg-126, and Lys-169. The FPG-type zinc-finger motif lies at 260–296; the sequence is SVYDRAGEACRKPGCDGTVTRIVQAGRSTFHCPRCQK. Catalysis depends on Arg-286, which acts as the Proton donor; for delta-elimination activity.

Belongs to the FPG family. Monomer. Zn(2+) is required as a cofactor.

The catalysed reaction is Hydrolysis of DNA containing ring-opened 7-methylguanine residues, releasing 2,6-diamino-4-hydroxy-5-(N-methyl)formamidopyrimidine.. It catalyses the reaction 2'-deoxyribonucleotide-(2'-deoxyribose 5'-phosphate)-2'-deoxyribonucleotide-DNA = a 3'-end 2'-deoxyribonucleotide-(2,3-dehydro-2,3-deoxyribose 5'-phosphate)-DNA + a 5'-end 5'-phospho-2'-deoxyribonucleoside-DNA + H(+). In terms of biological role, involved in base excision repair of DNA damaged by oxidation or by mutagenic agents. Acts as a DNA glycosylase that recognizes and removes damaged bases. Has a preference for oxidized purines, such as 7,8-dihydro-8-oxoguanine (8-oxoG). Has AP (apurinic/apyrimidinic) lyase activity and introduces nicks in the DNA strand. Cleaves the DNA backbone by beta-delta elimination to generate a single-strand break at the site of the removed base with both 3'- and 5'-phosphates. The sequence is that of Formamidopyrimidine-DNA glycosylase from Sinorhizobium fredii (strain NBRC 101917 / NGR234).